The sequence spans 282 residues: Bifunctional protein FolD 2 (282 aa).

NADP(+)-binding positions include 164–166 (GRS) and S189.

It belongs to the tetrahydrofolate dehydrogenase/cyclohydrolase family. As to quaternary structure, homodimer.

The catalysed reaction is (6R)-5,10-methylene-5,6,7,8-tetrahydrofolate + NADP(+) = (6R)-5,10-methenyltetrahydrofolate + NADPH. The enzyme catalyses (6R)-5,10-methenyltetrahydrofolate + H2O = (6R)-10-formyltetrahydrofolate + H(+). It participates in one-carbon metabolism; tetrahydrofolate interconversion. Its function is as follows. Catalyzes the oxidation of 5,10-methylenetetrahydrofolate to 5,10-methenyltetrahydrofolate and then the hydrolysis of 5,10-methenyltetrahydrofolate to 10-formyltetrahydrofolate. In Lactobacillus johnsonii (strain CNCM I-12250 / La1 / NCC 533), this protein is Bifunctional protein FolD 2.